A 261-amino-acid polypeptide reads, in one-letter code: Carnitinyl-CoA dehydratase (261 aa).

Residue glutamate 111 is the Nucleophile of the active site. Glutamate 131 serves as the catalytic Proton acceptor.

Belongs to the enoyl-CoA hydratase/isomerase family.

The catalysed reaction is (R)-carnitinyl-CoA = crotonobetainyl-CoA + H2O. It functions in the pathway amine and polyamine metabolism; carnitine metabolism. Its function is as follows. Catalyzes the reversible dehydration of L-carnitinyl-CoA to crotonobetainyl-CoA. This chain is Carnitinyl-CoA dehydratase, found in Escherichia coli (strain ATCC 8739 / DSM 1576 / NBRC 3972 / NCIMB 8545 / WDCM 00012 / Crooks).